Here is a 128-residue protein sequence, read N- to C-terminus: Glycine cleavage system H protein (128 aa).

The 83-residue stretch at 24 to 106 (LVRIGISEFA…HGEGWLLIIR (83 aa)) folds into the Lipoyl-binding domain. The residue at position 65 (Lys65) is an N6-lipoyllysine.

This sequence belongs to the GcvH family. The glycine cleavage system is composed of four proteins: P, T, L and H. (R)-lipoate is required as a cofactor.

Its function is as follows. The glycine cleavage system catalyzes the degradation of glycine. The H protein shuttles the methylamine group of glycine from the P protein to the T protein. This Prochlorococcus marinus (strain NATL1A) protein is Glycine cleavage system H protein.